A 222-amino-acid polypeptide reads, in one-letter code: Adenylate kinase (222 aa).

G16 to T21 provides a ligand contact to ATP. Positions A36 to V65 are NMP. Residues T37, R42, G63–V65, G92–R95, and Q99 contribute to the AMP site. Residues G133–D170 form an LID region. Residues R134 and S143–Y144 contribute to the ATP site. Residues R167 and R178 each contribute to the AMP site. Residue Q206 participates in ATP binding.

This sequence belongs to the adenylate kinase family. AK2 subfamily. Monomer.

It is found in the cytoplasm. The protein resides in the cytosol. It localises to the mitochondrion intermembrane space. It catalyses the reaction AMP + ATP = 2 ADP. Its function is as follows. Catalyzes the reversible transfer of the terminal phosphate group between ATP and AMP. Plays an important role in cellular energy homeostasis and in adenine nucleotide metabolism. Adenylate kinase activity is critical for regulation of the phosphate utilization and the AMP de novo biosynthesis pathways. In Candida glabrata (strain ATCC 2001 / BCRC 20586 / JCM 3761 / NBRC 0622 / NRRL Y-65 / CBS 138) (Yeast), this protein is Adenylate kinase.